We begin with the raw amino-acid sequence, 511 residues long: 2,3-bisphosphoglycerate-independent phosphoglycerate mutase (511 aa).

Residues aspartate 14 and serine 64 each coordinate Mn(2+). The active-site Phosphoserine intermediate is the serine 64. Residues histidine 125, 155-156, arginine 187, arginine 193, 259-262, and lysine 333 contribute to the substrate site; these read RD and RADR. The Mn(2+) site is built by aspartate 400, histidine 404, aspartate 441, histidine 442, and histidine 460.

This sequence belongs to the BPG-independent phosphoglycerate mutase family. As to quaternary structure, monomer. Mn(2+) serves as cofactor.

It carries out the reaction (2R)-2-phosphoglycerate = (2R)-3-phosphoglycerate. The protein operates within carbohydrate degradation; glycolysis; pyruvate from D-glyceraldehyde 3-phosphate: step 3/5. Functionally, catalyzes the interconversion of 2-phosphoglycerate and 3-phosphoglycerate. The polypeptide is 2,3-bisphosphoglycerate-independent phosphoglycerate mutase (Idiomarina loihiensis (strain ATCC BAA-735 / DSM 15497 / L2-TR)).